The sequence spans 1224 residues: DNA-directed RNA polymerase subunit beta (1224 aa).

Belongs to the RNA polymerase beta chain family. The RNAP catalytic core consists of 2 alpha, 1 beta, 1 beta' and 1 omega subunit. When a sigma factor is associated with the core the holoenzyme is formed, which can initiate transcription.

It carries out the reaction RNA(n) + a ribonucleoside 5'-triphosphate = RNA(n+1) + diphosphate. DNA-dependent RNA polymerase catalyzes the transcription of DNA into RNA using the four ribonucleoside triphosphates as substrates. The polypeptide is DNA-directed RNA polymerase subunit beta (Pelotomaculum thermopropionicum (strain DSM 13744 / JCM 10971 / SI)).